A 389-amino-acid polypeptide reads, in one-letter code: Xylose isomerase (389 aa).

Catalysis depends on residues histidine 54 and aspartate 57. Mg(2+) is bound by residues glutamate 181, glutamate 217, histidine 220, aspartate 245, aspartate 255, aspartate 257, and aspartate 287.

The protein belongs to the xylose isomerase family. Homotetramer. Requires Mg(2+) as cofactor.

The protein localises to the cytoplasm. The enzyme catalyses alpha-D-xylose = alpha-D-xylulofuranose. Involved in D-xylose catabolism. This Streptomyces violaceusniger protein is Xylose isomerase (xylA).